Reading from the N-terminus, the 551-residue chain is Glucans biosynthesis protein D (551 aa).

A signal peptide (tat-type signal) is located at residues Met1–Ala32.

It belongs to the OpgD/OpgG family. In terms of processing, predicted to be exported by the Tat system. The position of the signal peptide cleavage has not been experimentally proven.

The protein localises to the periplasm. It functions in the pathway glycan metabolism; osmoregulated periplasmic glucan (OPG) biosynthesis. Functionally, probably involved in the control of the structural glucose backbone of osmoregulated periplasmic glucans (OPGs). This chain is Glucans biosynthesis protein D (mdoD), found in Salmonella typhimurium (strain LT2 / SGSC1412 / ATCC 700720).